The primary structure comprises 808 residues: Copal-8-ol diphosphate hydratase, chloroplastic (808 aa).

The N-terminal 50 residues, 1–50, are a transit peptide targeting the chloroplast; it reads MAFTFTSAHLFLPVTENHSVHVNYSIPPGNWRLWSTAKGGSNKLDIRRLR. The stretch at 190–219 forms a coiled coil; that stretch reads DKCQKGLKFFRDNISKLEKENVEASAQMLS. Residue lysine 256 coordinates substrate. Mg(2+) contacts are provided by aspartate 391 and aspartate 393. The short motif at 391-394 is the DXDD motif element; that stretch reads DLDD. Residue lysine 477 participates in substrate binding.

It belongs to the terpene synthase family. It depends on Mg(2+) as a cofactor. Expressed in stems, leaves and trichomes. Not detected in roots and seeds. Higher expression in young leaves than in fully expanded leaves.

Its subcellular location is the plastid. The protein resides in the chloroplast. The catalysed reaction is (2E,6E,10E)-geranylgeranyl diphosphate + H2O = 8-hydroxycopalyl diphosphate. The protein operates within secondary metabolite biosynthesis; terpenoid biosynthesis. Functionally, involved in the biosynthesis of oxygen-containing labdane-type diterpenes that may be implicated in direct and indirect defense mechanisms. No activity with geranyl diphosphate or farnesyl diphosphate as substrate. The polypeptide is Copal-8-ol diphosphate hydratase, chloroplastic (Cistus creticus subsp. creticus (Rock rose)).